The primary structure comprises 368 residues: MAPCMLLLLLAAALAPTQTRAGPHSLRYFHTAVSRPGLGKPRFISVGYVDDTEFVRFDSDAENPRYEPRARWMEQVEPEYWERNTQIAKDNEQSSRVDLRTLLRYYNQSAGGSHTIQRMYGCDVGSDGRLLRGYEQVAYDGCDYIALNEDLKTWTAADMAALITKHKWEQAGAAERRRAYLEGACVEWLSRHLKNGNATLLRTDSPKAHVTHHSRPEDKVTLRCWALGFYPADITLTWQLNGEELTQDMELVETRPAGDGTFQKWASVVVPLGKEQYYTCHVYHQGLPKPLTLRWEPPPSAVSNTVIIAVLVVLGAAIVTGAVVAFVMMRRRNTGGKGGDYALAPGSQTSDLSLPDCKVMVHDPHSLA.

The signal sequence occupies residues 1 to 21 (MAPCMLLLLLAAALAPTQTRA). The alpha-1 stretch occupies residues 22–111 (GPHSLRYFHT…LLRYYNQSAG (90 aa)). The Extracellular portion of the chain corresponds to 22-305 (GPHSLRYFHT…EPPPSAVSNT (284 aa)). N-linked (GlcNAc...) asparagine glycosylation occurs at Asn107. The segment at 112 to 203 (GSHTIQRMYG…KNGNATLLRT (92 aa)) is alpha-2. Residues Cys122 and Cys185 are joined by a disulfide bond. Asn197 carries N-linked (GlcNAc...) asparagine glycosylation. An alpha-3 region spans residues 204–295 (DSPKAHVTHH…GLPKPLTLRW (92 aa)). The Ig-like C1-type domain occupies 206-292 (PKAHVTHHSR…YHQGLPKPLT (87 aa)). A disulfide bridge connects residues Cys224 and Cys280. The segment at 296–305 (EPPPSAVSNT) is connecting peptide. A helical membrane pass occupies residues 306 to 329 (VIIAVLVVLGAAIVTGAVVAFVMM). The Cytoplasmic segment spans residues 330–368 (RRRNTGGKGGDYALAPGSQTSDLSLPDCKVMVHDPHSLA). 2 positions are modified to phosphoserine: Ser350 and Ser353.

Belongs to the MHC class I family. Heterodimer of an alpha chain and a beta chain (beta-2-microglobulin).

The protein resides in the membrane. Functionally, involved in the presentation of foreign antigens to the immune system. This chain is H-2 class I histocompatibility antigen, K-W28 alpha chain (H2-K1), found in Mus musculus (Mouse).